The primary structure comprises 505 residues: Maturase K (505 aa).

Belongs to the intron maturase 2 family. MatK subfamily.

It localises to the plastid. It is found in the chloroplast. Its function is as follows. Usually encoded in the trnK tRNA gene intron. Probably assists in splicing its own and other chloroplast group II introns. The protein is Maturase K of Calycanthus occidentalis (Spice bush).